We begin with the raw amino-acid sequence, 436 residues long: Fibrinogen gamma chain (436 aa).

Positions 1–25 (MSWSLQPPSFLLCCLLLLFSPTGLA) are cleaved as a signal peptide. N77 carries N-linked (GlcNAc...) asparagine glycosylation. A Fibrinogen C-terminal domain is found at 169 to 415 (QIHDTTGKDC…ETTMKIIPFN (247 aa)). An intrachain disulfide couples C178 to C207. Ca(2+) is bound by residues D343, D345, and G349. C351 and C364 are joined by a disulfide. An Isoglutamyl lysine isopeptide (Gln-Lys) (interchain with K-431) cross-link involves residue Q423. S430 carries the post-translational modification Phosphoserine. K431 is covalently cross-linked (Isoglutamyl lysine isopeptide (Lys-Gln) (interchain with Q-423)).

In terms of assembly, heterohexamer; disulfide linked. Contains 2 sets of 3 non-identical chains (alpha, beta and gamma). The 2 heterotrimers are in head to head conformation with the N-termini in a small central domain. In terms of processing, conversion of fibrinogen to fibrin is triggered by thrombin, which cleaves fibrinopeptides A and B from alpha and beta chains, and thus exposes the N-terminal polymerization sites responsible for the formation of the soft clot. The soft clot is converted into the hard clot by factor XIIIA which catalyzes the epsilon-(gamma-glutamyl)lysine cross-linking between gamma chains (stronger) and between alpha chains (weaker) of different monomers.

It localises to the secreted. In terms of biological role, together with fibrinogen alpha (FGA) and fibrinogen beta (FGB), polymerizes to form an insoluble fibrin matrix. Fibrin has a major function in hemostasis as one of the primary components of blood clots. In addition, functions during the early stages of wound repair to stabilize the lesion and guide cell migration during re-epithelialization. Was originally thought to be essential for platelet aggregation, based on in vitro studies using anticoagulated blood. However, subsequent studies have shown that it is not absolutely required for thrombus formation in vivo. Enhances expression of SELP in activated platelets via an ITGB3-dependent pathway. Maternal fibrinogen is essential for successful pregnancy. Fibrin deposition is also associated with infection, where it protects against IFNG-mediated hemorrhage. May also facilitate the immune response via both innate and T-cell mediated pathways. The sequence is that of Fibrinogen gamma chain (Fgg) from Mus musculus (Mouse).